Consider the following 498-residue polypeptide: Cytochrome P450 6B1 (498 aa).

C443 serves as a coordination point for heme.

Belongs to the cytochrome P450 family. Requires heme as cofactor. In terms of tissue distribution, midgut microsome.

It localises to the endoplasmic reticulum membrane. The protein resides in the microsome membrane. It catalyses the reaction an organic molecule + reduced [NADPH--hemoprotein reductase] + O2 = an alcohol + oxidized [NADPH--hemoprotein reductase] + H2O + H(+). Functionally, enables the insect to feed on furanocoumarin-producing plants and evolved as an adaptation for detoxification of xanthotoxin and other furanocoumarins. The protein is Cytochrome P450 6B1 (CYP6B1) of Papilio polyxenes (Black swallowtail butterfly).